The following is a 222-amino-acid chain: DNA-directed RNA polymerase V subunit 5A (222 aa).

The protein belongs to the archaeal Rpo5/eukaryotic RPB5 RNA polymerase subunit family. In terms of assembly, component of the RNA polymerase V complex. As to expression, expressed in roots, leaves, siliques and seeds, and to a lower level, in flower buds and flowers.

Its subcellular location is the nucleus. Its function is as follows. DNA-dependent RNA polymerase catalyzes the transcription of DNA into RNA using the four ribonucleoside triphosphates as substrates. Component of RNA polymerase V involved in RNA-directed DNA methylation-dependent (RdDM) silencing of endogenous repeated sequences, including transposable elements. Required for establishment of DNA methylation. The sequence is that of DNA-directed RNA polymerase V subunit 5A (NRPE5A) from Arabidopsis thaliana (Mouse-ear cress).